A 169-amino-acid polypeptide reads, in one-letter code: Probable NADH dehydrogenase [ubiquinone] 1 alpha subcomplex subunit 5, mitochondrial (169 aa).

The N-terminal 11 residues, 1 to 11 (MFLRAIGRPLL), are a transit peptide targeting the mitochondrion.

Belongs to the complex I NDUFA5 subunit family. In terms of assembly, complex I is composed of at least 49 different subunits.

Its subcellular location is the mitochondrion inner membrane. Functionally, accessory subunit of the mitochondrial membrane respiratory chain NADH dehydrogenase (Complex I), that is believed not to be involved in catalysis. Complex I functions in the transfer of electrons from NADH to the respiratory chain. The immediate electron acceptor for the enzyme is believed to be ubiquinone. The protein is Probable NADH dehydrogenase [ubiquinone] 1 alpha subcomplex subunit 5, mitochondrial of Arabidopsis thaliana (Mouse-ear cress).